The primary structure comprises 394 residues: Quinolinate synthase (394 aa).

Positions 67 and 84 each coordinate iminosuccinate. C131 is a [4Fe-4S] cluster binding site. Iminosuccinate contacts are provided by residues 163–165 (YMN) and S184. C254 provides a ligand contact to [4Fe-4S] cluster. Residues 280–282 (HPE) and T297 each bind iminosuccinate. C346 contacts [4Fe-4S] cluster.

This sequence belongs to the quinolinate synthase family. Type 3 subfamily. Requires [4Fe-4S] cluster as cofactor.

The protein localises to the cytoplasm. It catalyses the reaction iminosuccinate + dihydroxyacetone phosphate = quinolinate + phosphate + 2 H2O + H(+). It participates in cofactor biosynthesis; NAD(+) biosynthesis; quinolinate from iminoaspartate: step 1/1. Its function is as follows. Catalyzes the condensation of iminoaspartate with dihydroxyacetone phosphate to form quinolinate. This is Quinolinate synthase from Streptomyces coelicolor (strain ATCC BAA-471 / A3(2) / M145).